The chain runs to 77 residues: Liver-expressed antimicrobial peptide 2 (77 aa).

The signal sequence occupies residues 1–22 (MWHLKLCAVLMIFLLLLGQIDG). The propeptide occupies 23 to 37 (SPIPEVSSAKRRPRR). 2 disulfides stabilise this stretch: Cys54-Cys65 and Cys60-Cys70.

Belongs to the LEAP2 family.

It is found in the secreted. Its function is as follows. Has an antimicrobial activity. The protein is Liver-expressed antimicrobial peptide 2 (LEAP2) of Homo sapiens (Human).